The chain runs to 457 residues: Adenylosuccinate synthetase isozyme 1 (457 aa).

Residues 1–24 form a disordered region; the sequence is MSGTRASNDRPPGTGGVKRGRLQQ. GTP-binding positions include 42 to 48 and 70 to 72; these read GDEGKGK and GHT. The active-site Proton acceptor is D43. Residues D43 and G70 each contribute to the Mg(2+) site. D43 is a substrate binding site. Residues 43 to 46, 68 to 71, T163, R177, N256, T271, and R335 each bind IMP; these read DEGK and NAGH. The Proton donor role is filled by H71. Residue 331–337 coordinates substrate; sequence VTTGRKR. Residues R337, 363-365, and 445-448 contribute to the GTP site; these read KLD and GVGK.

This sequence belongs to the adenylosuccinate synthetase family. Homodimer. Requires Mg(2+) as cofactor. High levels in muscle.

It localises to the cytoplasm. The protein resides in the membrane. The catalysed reaction is IMP + L-aspartate + GTP = N(6)-(1,2-dicarboxyethyl)-AMP + GDP + phosphate + 2 H(+). Its pathway is purine metabolism; AMP biosynthesis via de novo pathway; AMP from IMP: step 1/2. Its activity is regulated as follows. Weakly inhibited by AMP non-competitively to all substrates. Inhibited by IMP non-competitively with respect to GTP. Inhibited by fructose 1,6-bisphosphate competitively with respect to IMP. Functionally, component of the purine nucleotide cycle (PNC), which interconverts IMP and AMP to regulate the nucleotide levels in various tissues, and which contributes to glycolysis and ammoniagenesis. Catalyzes the first committed step in the biosynthesis of AMP from IMP. The protein is Adenylosuccinate synthetase isozyme 1 (Adss1) of Mus musculus (Mouse).